Reading from the N-terminus, the 86-residue chain is Putative antitoxin VapB5 (86 aa).

This sequence belongs to the phD/YefM antitoxin family. As to quaternary structure, forms a complex with VapC5.

Its function is as follows. Probable antitoxin component of a probable type II toxin-antitoxin (TA) system. The cognate toxin is VapC5. The polypeptide is Putative antitoxin VapB5 (vapB5) (Mycobacterium tuberculosis (strain CDC 1551 / Oshkosh)).